The primary structure comprises 256 residues: Thiazole synthase (256 aa).

Residue lysine 96 is the Schiff-base intermediate with DXP of the active site. Residues glycine 157, 184–185 (AG), and 206–207 (NT) each bind 1-deoxy-D-xylulose 5-phosphate.

This sequence belongs to the ThiG family. Homotetramer. Forms heterodimers with either ThiH or ThiS.

The protein localises to the cytoplasm. The catalysed reaction is [ThiS sulfur-carrier protein]-C-terminal-Gly-aminoethanethioate + 2-iminoacetate + 1-deoxy-D-xylulose 5-phosphate = [ThiS sulfur-carrier protein]-C-terminal Gly-Gly + 2-[(2R,5Z)-2-carboxy-4-methylthiazol-5(2H)-ylidene]ethyl phosphate + 2 H2O + H(+). It functions in the pathway cofactor biosynthesis; thiamine diphosphate biosynthesis. In terms of biological role, catalyzes the rearrangement of 1-deoxy-D-xylulose 5-phosphate (DXP) to produce the thiazole phosphate moiety of thiamine. Sulfur is provided by the thiocarboxylate moiety of the carrier protein ThiS. In vitro, sulfur can be provided by H(2)S. This is Thiazole synthase from Brucella suis (strain ATCC 23445 / NCTC 10510).